We begin with the raw amino-acid sequence, 318 residues long: Methionyl-tRNA formyltransferase (318 aa).

(6S)-5,6,7,8-tetrahydrofolate is bound at residue S112–P115.

Belongs to the Fmt family.

It carries out the reaction L-methionyl-tRNA(fMet) + (6R)-10-formyltetrahydrofolate = N-formyl-L-methionyl-tRNA(fMet) + (6S)-5,6,7,8-tetrahydrofolate + H(+). Functionally, attaches a formyl group to the free amino group of methionyl-tRNA(fMet). The formyl group appears to play a dual role in the initiator identity of N-formylmethionyl-tRNA by promoting its recognition by IF2 and preventing the misappropriation of this tRNA by the elongation apparatus. The protein is Methionyl-tRNA formyltransferase of Haemophilus influenzae (strain ATCC 51907 / DSM 11121 / KW20 / Rd).